Here is a 301-residue protein sequence, read N- to C-terminus: Envoplakin-like protein (301 aa).

Residues 1 to 88 adopt a coiled-coil conformation; it reads MQASADQVER…ERVTQECAEY (88 aa). 2 disordered regions span residues 18–41 and 118–166; these read RLQQDRLNSEQSQALQHQQETGSS and GLRR…PEPI. A compositionally biased stretch (polar residues) spans 26-41; it reads SEQSQALQHQQETGSS. Positions 136–151 are enriched in basic and acidic residues; sequence GAQHRAEGDQRPRRAA.

The protein belongs to the plakin or cytolinker family.

This chain is Envoplakin-like protein (EVPLL), found in Homo sapiens (Human).